A 132-amino-acid chain; its full sequence is MGNDTIANMITSVRNANLGKEETVRVPATNINRSIGKILLQEGFVKNLGELREGTNHFMILTLKYRGRKREPYITTLRRISKPGLRLYYNYKKIPKVLGGMGVVIPSTSCGTMTDREARQKQIGGEILCYVW.

Belongs to the universal ribosomal protein uS8 family. Part of the 30S ribosomal subunit.

It is found in the plastid. Its subcellular location is the chloroplast. One of the primary rRNA binding proteins, it binds directly to 16S rRNA central domain where it helps coordinate assembly of the platform of the 30S subunit. The sequence is that of Small ribosomal subunit protein uS8c (rps8) from Huperzia lucidula (Shining clubmoss).